The following is a 129-amino-acid chain: Phosphoribosyl-AMP cyclohydrolase (129 aa).

Position 87 (Asp-87) interacts with Mg(2+). Cys-88 serves as a coordination point for Zn(2+). Residues Asp-89 and Asp-91 each contribute to the Mg(2+) site. 2 residues coordinate Zn(2+): Cys-104 and Cys-111.

Belongs to the PRA-CH family. In terms of assembly, homodimer. Mg(2+) serves as cofactor. It depends on Zn(2+) as a cofactor.

It localises to the cytoplasm. The enzyme catalyses 1-(5-phospho-beta-D-ribosyl)-5'-AMP + H2O = 1-(5-phospho-beta-D-ribosyl)-5-[(5-phospho-beta-D-ribosylamino)methylideneamino]imidazole-4-carboxamide. It participates in amino-acid biosynthesis; L-histidine biosynthesis; L-histidine from 5-phospho-alpha-D-ribose 1-diphosphate: step 3/9. Catalyzes the hydrolysis of the adenine ring of phosphoribosyl-AMP. The protein is Phosphoribosyl-AMP cyclohydrolase of Ruegeria sp. (strain TM1040) (Silicibacter sp.).